We begin with the raw amino-acid sequence, 307 residues long: N-acetylmuramic acid 6-phosphate etherase (307 aa).

The SIS domain occupies 59–222; the sequence is TADRLRQGGR…STGVMVKLGK (164 aa). The active-site Proton donor is the Glu-87. The active site involves Glu-118.

It belongs to the GCKR-like family. MurNAc-6-P etherase subfamily. Homodimer.

It catalyses the reaction N-acetyl-D-muramate 6-phosphate + H2O = N-acetyl-D-glucosamine 6-phosphate + (R)-lactate. Its pathway is amino-sugar metabolism; N-acetylmuramate degradation. Specifically catalyzes the cleavage of the D-lactyl ether substituent of MurNAc 6-phosphate, producing GlcNAc 6-phosphate and D-lactate. The polypeptide is N-acetylmuramic acid 6-phosphate etherase (Trichormus variabilis (strain ATCC 29413 / PCC 7937) (Anabaena variabilis)).